Here is a 360-residue protein sequence, read N- to C-terminus: uncharacterized protein (360 aa).

The ABC transporter domain occupies Leu4–Ile235. Residue Gly37–Ser44 coordinates ATP.

The protein belongs to the ABC transporter superfamily.

This is an uncharacterized protein from Escherichia coli O6:K15:H31 (strain 536 / UPEC).